The chain runs to 122 residues: MIQQESRLKVADNSGARELLTIKVLGGSGRKYAYIGDIIVATVKQATPGGVVKKGDVVKAVVVRTKSGARRPDGSYIKFDENAAVIIKDDKSPRGTRIFGPVARELRDSNFMKIVSLAPEVL.

The protein belongs to the universal ribosomal protein uL14 family. Part of the 50S ribosomal subunit. Forms a cluster with proteins L3 and L19. In the 70S ribosome, L14 and L19 interact and together make contacts with the 16S rRNA in bridges B5 and B8.

Its function is as follows. Binds to 23S rRNA. Forms part of two intersubunit bridges in the 70S ribosome. This Bacillus mycoides (strain KBAB4) (Bacillus weihenstephanensis) protein is Large ribosomal subunit protein uL14.